A 183-amino-acid polypeptide reads, in one-letter code: Senescence-associated protein DIN1 (183 aa).

A Rhodanese domain is found at 83 to 183 (AQAGYKHLDV…WTENELPVEE (101 aa)).

Its function is as follows. Is thought to act during the early stages of leaf senescence. The sequence is that of Senescence-associated protein DIN1 (DIN1) from Raphanus sativus (Radish).